The primary structure comprises 137 residues: Ribonuclease kappa (137 aa).

The next 2 membrane-spanning stretches (helical) occupy residues 52–72 (ACGI…GIFF) and 104–124 (VSYN…FSFC).

It belongs to the RNase K family. As to quaternary structure, interacts with the proton translocation complex V0 of the V-ATPase. Interacts with ATP6AP1. As to expression, widely expressed.

The protein localises to the endomembrane system. Its subcellular location is the cytoplasmic vesicle. It is found in the clathrin-coated vesicle membrane. Its function is as follows. Endoribonuclease which preferentially cleaves ApU and ApG phosphodiester bonds. Hydrolyzes UpU bonds at a lower rate. Regulates the activity of vacuolar (H+)-ATPase (V-ATPase) which is responsible for acidifying and maintaining the pH of intracellular compartments. Required at an early stage of receptor-mediated endocytosis. (Microbial infection) Required at an early stage of both clathrin-mediated and clathrin-independent endocytic uptake of a diverse set of viruses, including dengue, West Nile, Sindbis, Rift Valley Fever, influenza, and human rhinoviruses. The sequence is that of Ribonuclease kappa (RNASEK) from Homo sapiens (Human).